We begin with the raw amino-acid sequence, 161 residues long: DNA-binding protein inhibitor ID-4 (161 aa).

The 53-residue stretch at A52–L104 folds into the bHLH domain. A compositionally biased stretch (pro residues) spans Q117–H126. Residues Q117–R161 form a disordered region.

In terms of assembly, heterodimer with other HLH proteins.

The protein resides in the nucleus. Its function is as follows. Transcriptional regulator (lacking a basic DNA binding domain) which negatively regulates the basic helix-loop-helix (bHLH) transcription factors by forming heterodimers and inhibiting their DNA binding and transcriptional activity. Implicated in regulating a variety of cellular processes, including cellular growth, senescence, differentiation, apoptosis, angiogenesis, and neoplastic transformation. This is DNA-binding protein inhibitor ID-4 (ID4) from Homo sapiens (Human).